A 300-amino-acid polypeptide reads, in one-letter code: Delta-9 desaturase-like 4 protein (300 aa).

2 consecutive transmembrane segments (helical) span residues 39-59 and 61-81; these read VVVI…WEAL and FGLV…HRNL. Positions 78–83 match the Histidine box-1 motif; the sequence is HRNLSH. The short motif at 115 to 119 is the Histidine box-2 element; that stretch reads HRFHH. The next 2 membrane-spanning stretches (helical) occupy residues 175 to 195 and 200 to 220; these read IAVH…LPYL and GVGI…CHIW. The short motif at 247 to 251 is the Histidine box-3 element; sequence HNNHH.

Belongs to the fatty acid desaturase type 1 family. It depends on Fe cation as a cofactor.

The protein localises to the endoplasmic reticulum membrane. Its pathway is lipid metabolism; polyunsaturated fatty acid biosynthesis. This Arabidopsis thaliana (Mouse-ear cress) protein is Delta-9 desaturase-like 4 protein.